The primary structure comprises 157 residues: Crossover junction endodeoxyribonuclease RuvC (157 aa).

Active-site residues include Asp-7, Glu-66, and Asp-139. Positions 7, 66, and 139 each coordinate Mg(2+).

It belongs to the RuvC family. As to quaternary structure, homodimer which binds Holliday junction (HJ) DNA. The HJ becomes 2-fold symmetrical on binding to RuvC with unstacked arms; it has a different conformation from HJ DNA in complex with RuvA. In the full resolvosome a probable DNA-RuvA(4)-RuvB(12)-RuvC(2) complex forms which resolves the HJ. Requires Mg(2+) as cofactor.

The protein localises to the cytoplasm. The catalysed reaction is Endonucleolytic cleavage at a junction such as a reciprocal single-stranded crossover between two homologous DNA duplexes (Holliday junction).. In terms of biological role, the RuvA-RuvB-RuvC complex processes Holliday junction (HJ) DNA during genetic recombination and DNA repair. Endonuclease that resolves HJ intermediates. Cleaves cruciform DNA by making single-stranded nicks across the HJ at symmetrical positions within the homologous arms, yielding a 5'-phosphate and a 3'-hydroxyl group; requires a central core of homology in the junction. The consensus cleavage sequence is 5'-(A/T)TT(C/G)-3'. Cleavage occurs on the 3'-side of the TT dinucleotide at the point of strand exchange. HJ branch migration catalyzed by RuvA-RuvB allows RuvC to scan DNA until it finds its consensus sequence, where it cleaves and resolves the cruciform DNA. The polypeptide is Crossover junction endodeoxyribonuclease RuvC (Helicobacter acinonychis (strain Sheeba)).